The following is a 202-amino-acid chain: MPIGVPSVPFRLPGSQYERWIDIYTRLSQERIIFLGQEVNDSIANRIVAFLLYLDSDDPSKPIYLYINSPGGSVTAGMAIYDTMQYIKAEVITICVGLAASMGAFLLASGAPGKRLALPHARIMIHQPMGGTGRRQATDIDIEAREILRIRQQLNEIMAQRTGQTVEKIAKDTDRDYFLSAAEAKEYGLIDKVIENSTMGNN.

Catalysis depends on serine 101, which acts as the Nucleophile. Histidine 126 is a catalytic residue.

Belongs to the peptidase S14 family. Fourteen ClpP subunits assemble into 2 heptameric rings which stack back to back to give a disk-like structure with a central cavity, resembling the structure of eukaryotic proteasomes.

The protein resides in the cytoplasm. It catalyses the reaction Hydrolysis of proteins to small peptides in the presence of ATP and magnesium. alpha-casein is the usual test substrate. In the absence of ATP, only oligopeptides shorter than five residues are hydrolyzed (such as succinyl-Leu-Tyr-|-NHMec, and Leu-Tyr-Leu-|-Tyr-Trp, in which cleavage of the -Tyr-|-Leu- and -Tyr-|-Trp bonds also occurs).. Functionally, cleaves peptides in various proteins in a process that requires ATP hydrolysis. Has a chymotrypsin-like activity. Plays a major role in the degradation of misfolded proteins. This is Probable ATP-dependent Clp protease proteolytic subunit 3 from Synechocystis sp. (strain ATCC 27184 / PCC 6803 / Kazusa).